Consider the following 450-residue polypeptide: Chromosomal replication initiator protein DnaA (450 aa).

The interval 1 to 84 is domain I, interacts with DnaA modulators; it reads MTENEQIFWN…AVDYVYEEDL (84 aa). Positions 84 to 109 are domain II; that stretch reads LIIEQQHQGQQGYTEQAFQQLPAVQS. Residues 110 to 328 form a domain III, AAA+ region region; it reads DLNPKYSFDN…GALKDISLVA (219 aa). The ATP site is built by Gly154, Gly156, Lys157, and Thr158. Positions 329–450 are domain IV, binds dsDNA; the sequence is NFKQIDTITV…EIETIKNKIK (122 aa).

The protein belongs to the DnaA family. Oligomerizes as a right-handed, spiral filament on DNA at oriC.

The protein resides in the cytoplasm. Its function is as follows. Plays an essential role in the initiation and regulation of chromosomal replication. ATP-DnaA binds to the origin of replication (oriC) to initiate formation of the DNA replication initiation complex once per cell cycle. Binds the DnaA box (a 9 base pair repeat at the origin) and separates the double-stranded (ds)DNA. Forms a right-handed helical filament on oriC DNA; dsDNA binds to the exterior of the filament while single-stranded (ss)DNA is stabiized in the filament's interior. The ATP-DnaA-oriC complex binds and stabilizes one strand of the AT-rich DNA unwinding element (DUE), permitting loading of DNA polymerase. After initiation quickly degrades to an ADP-DnaA complex that is not apt for DNA replication. Binds acidic phospholipids. The protein is Chromosomal replication initiator protein DnaA of Streptococcus equi subsp. zooepidemicus (strain MGCS10565).